Here is a 288-residue protein sequence, read N- to C-terminus: ATP synthase gamma chain (288 aa).

Belongs to the ATPase gamma chain family. F-type ATPases have 2 components, CF(1) - the catalytic core - and CF(0) - the membrane proton channel. CF(1) has five subunits: alpha(3), beta(3), gamma(1), delta(1), epsilon(1). CF(0) has three main subunits: a, b and c.

The protein resides in the cell inner membrane. Functionally, produces ATP from ADP in the presence of a proton gradient across the membrane. The gamma chain is believed to be important in regulating ATPase activity and the flow of protons through the CF(0) complex. The protein is ATP synthase gamma chain of Chromobacterium violaceum (strain ATCC 12472 / DSM 30191 / JCM 1249 / CCUG 213 / NBRC 12614 / NCIMB 9131 / NCTC 9757 / MK).